The following is a 404-amino-acid chain: 8-amino-7-oxononanoate synthase (404 aa).

Residue Arg20 coordinates substrate. Gly116–Tyr117 lines the pyridoxal 5'-phosphate pocket. His141 is a substrate binding site. Positions 187, 215, and 243 each coordinate pyridoxal 5'-phosphate. Lys246 carries the post-translational modification N6-(pyridoxal phosphate)lysine. Position 366 (Thr366) interacts with substrate.

The protein belongs to the class-II pyridoxal-phosphate-dependent aminotransferase family. BioF subfamily. As to quaternary structure, homodimer. Requires pyridoxal 5'-phosphate as cofactor.

It carries out the reaction 6-carboxyhexanoyl-[ACP] + L-alanine + H(+) = (8S)-8-amino-7-oxononanoate + holo-[ACP] + CO2. The protein operates within cofactor biosynthesis; biotin biosynthesis. In terms of biological role, catalyzes the decarboxylative condensation of pimeloyl-[acyl-carrier protein] and L-alanine to produce 8-amino-7-oxononanoate (AON), [acyl-carrier protein], and carbon dioxide. This is 8-amino-7-oxononanoate synthase from Cupriavidus necator (strain ATCC 17699 / DSM 428 / KCTC 22496 / NCIMB 10442 / H16 / Stanier 337) (Ralstonia eutropha).